The primary structure comprises 426 residues: Adenylosuccinate synthetase (426 aa).

GTP-binding positions include 14–20 and 42–44; these read GDEGKGK and GHT. The active-site Proton acceptor is the aspartate 15. Residues aspartate 15 and glycine 42 each coordinate Mg(2+). IMP-binding positions include 15 to 18, 40 to 43, threonine 130, arginine 144, glutamine 224, threonine 239, and arginine 303; these read DEGK and NAGH. Histidine 43 functions as the Proton donor in the catalytic mechanism. Position 299-305 (299-305) interacts with substrate; the sequence is TVTKRPR. GTP is bound by residues arginine 305, 331 to 333, and 413 to 415; these read LID and SVG.

The protein belongs to the adenylosuccinate synthetase family. Homodimer. The cofactor is Mg(2+).

Its subcellular location is the cytoplasm. The catalysed reaction is IMP + L-aspartate + GTP = N(6)-(1,2-dicarboxyethyl)-AMP + GDP + phosphate + 2 H(+). It participates in purine metabolism; AMP biosynthesis via de novo pathway; AMP from IMP: step 1/2. In terms of biological role, plays an important role in the de novo pathway of purine nucleotide biosynthesis. Catalyzes the first committed step in the biosynthesis of AMP from IMP. This chain is Adenylosuccinate synthetase, found in Malacoplasma penetrans (strain HF-2) (Mycoplasma penetrans).